The chain runs to 209 residues: Probable GTP-binding protein EngB (209 aa).

In terms of domain architecture, EngB-type G spans 22–198 (TPLEIAFVGR…NRTVGSWLDA (177 aa)). Residues S37 and T59 each contribute to the Mg(2+) site.

This sequence belongs to the TRAFAC class TrmE-Era-EngA-EngB-Septin-like GTPase superfamily. EngB GTPase family. It depends on Mg(2+) as a cofactor.

In terms of biological role, necessary for normal cell division and for the maintenance of normal septation. This Neisseria meningitidis serogroup B (strain ATCC BAA-335 / MC58) protein is Probable GTP-binding protein EngB.